The chain runs to 215 residues: Ribonuclease T (215 aa).

The 175-residue stretch at 20-194 (VVIDVETAGF…YDTERTAVLF (175 aa)) folds into the Exonuclease domain. The Mg(2+) site is built by aspartate 23, glutamate 25, histidine 181, and aspartate 186. Histidine 181 (proton donor/acceptor) is an active-site residue.

It belongs to the RNase T family. In terms of assembly, homodimer. The cofactor is Mg(2+).

Trims short 3' overhangs of a variety of RNA species, leaving a one or two nucleotide 3' overhang. Responsible for the end-turnover of tRNA: specifically removes the terminal AMP residue from uncharged tRNA (tRNA-C-C-A). Also appears to be involved in tRNA biosynthesis. The sequence is that of Ribonuclease T from Citrobacter koseri (strain ATCC BAA-895 / CDC 4225-83 / SGSC4696).